The chain runs to 341 residues: UDP-3-O-acylglucosamine N-acyltransferase (341 aa).

The Proton acceptor role is filled by His237.

Belongs to the transferase hexapeptide repeat family. LpxD subfamily. In terms of assembly, homotrimer.

The catalysed reaction is a UDP-3-O-[(3R)-3-hydroxyacyl]-alpha-D-glucosamine + a (3R)-hydroxyacyl-[ACP] = a UDP-2-N,3-O-bis[(3R)-3-hydroxyacyl]-alpha-D-glucosamine + holo-[ACP] + H(+). The protein operates within bacterial outer membrane biogenesis; LPS lipid A biosynthesis. Catalyzes the N-acylation of UDP-3-O-acylglucosamine using 3-hydroxyacyl-ACP as the acyl donor. Is involved in the biosynthesis of lipid A, a phosphorylated glycolipid that anchors the lipopolysaccharide to the outer membrane of the cell. This Azoarcus sp. (strain BH72) protein is UDP-3-O-acylglucosamine N-acyltransferase.